The primary structure comprises 239 residues: Large ribosomal subunit protein uL1 (239 aa).

It belongs to the universal ribosomal protein uL1 family. In terms of assembly, part of the 50S ribosomal subunit.

Functionally, binds directly to 23S rRNA. The L1 stalk is quite mobile in the ribosome, and is involved in E site tRNA release. Protein L1 is also a translational repressor protein, it controls the translation of the L11 operon by binding to its mRNA. The protein is Large ribosomal subunit protein uL1 of Rickettsia akari (strain Hartford).